We begin with the raw amino-acid sequence, 281 residues long: Ribosomal RNA small subunit methyltransferase A (281 aa).

Positions 25, 27, 52, 74, 100, and 119 each coordinate S-adenosyl-L-methionine.

It belongs to the class I-like SAM-binding methyltransferase superfamily. rRNA adenine N(6)-methyltransferase family. RsmA subfamily.

The protein localises to the cytoplasm. The catalysed reaction is adenosine(1518)/adenosine(1519) in 16S rRNA + 4 S-adenosyl-L-methionine = N(6)-dimethyladenosine(1518)/N(6)-dimethyladenosine(1519) in 16S rRNA + 4 S-adenosyl-L-homocysteine + 4 H(+). Functionally, specifically dimethylates two adjacent adenosines (A1518 and A1519) in the loop of a conserved hairpin near the 3'-end of 16S rRNA in the 30S particle. May play a critical role in biogenesis of 30S subunits. This is Ribosomal RNA small subunit methyltransferase A from Paramagnetospirillum magneticum (strain ATCC 700264 / AMB-1) (Magnetospirillum magneticum).